The sequence spans 109 residues: Antifungal protein ginkbilobin-like protein (109 aa).

One can recognise a Gnk2-homologous domain in the interval 4 to 109; that stretch reads TNFVSSACNT…CFIQYEQHSF (106 aa). 3 disulfides stabilise this stretch: C11-C87, C63-C72, and C75-C100. N12 is an alpha-D-mannopyranose binding site. Residues R94 and E105 each contribute to the alpha-D-mannopyranose site.

Functionally, exerts antifungal activity through its carbohydrate-binding specificity. The polypeptide is Antifungal protein ginkbilobin-like protein (Picea abies (Norway spruce)).